The primary structure comprises 1269 residues: Protein flightless-1 homolog (1269 aa).

Met1 is subject to N-acetylmethionine. The interaction with LRRFIP1 and LRRFIP2 stretch occupies residues 1-427 (MEATGVLPFV…SGPKDPMARK (427 aa)). LRR repeat units follow at residues 7–32 (LPFVRGVDLSGNDFKGGYFPENVKAM), 33–55 (TSLRWLKLNRTGLCYLPEELAAL), 56–78 (QKLEHLSVSHNNLTTLHGELSSL), 80–103 (SLRAIVARANSLKNSGVPDDIFKL), 104–126 (DDLSVLDLSHNQLTECPRELENA), 127–149 (KNMLVLNLSHNSIDTIPNQLFIN), 150–173 (LTDLLYLDLSENRLESLPPQMRRL), 175–196 (HLQTLVLNGNPLLHAQLRQLPA), 197–222 (MTALQTLHLRSTQRTQSNLPTSLEGL), 223–245 (SNLADVDLSCNDLTRVPECLYTL), 247–268 (SLRRLNLSSNQITELSLCIDQW), 269–291 (VHVETLNLSRNQLTSLPSAICKL), 293–316 (KLKKLYLNSNKLDFDGLPSGIGKL), 318–339 (NLEEFMAANNNLELVPESLCRC), 340–363 (PKLRKLVLNKNHLVTLPEAIHFLT), and 365–385 (IEVLDVRENPNLVMPPKPADR). The residue at position 21 (Lys21) is an N6-acetyllysine. Residue Ser406 is modified to Phosphoserine. Position 436 is a phosphoserine; by SGK3 (Ser436). The tract at residues 452 to 473 (VAQEKNKKQEESADARAPSGKV) is disordered. The span at 453 to 465 (AQEKNKKQEESAD) shows a compositional bias: basic and acidic residues. An interaction with ACTL6A region spans residues 495-827 (VGQLPGLTIW…TVSRSLEGTE (333 aa)). Gelsolin-like repeat units follow at residues 509–591 (FVPV…EEFL), 629–703 (NIKL…PEFW), and 758–831 (ELMP…AQVF). Thr818 carries the phosphothreonine; by SGK3 modification. Phosphoserine is present on residues Ser856 and Ser860. Residues 951–975 (KKEDKEEKAEGKEGEEATAEAEEKQ) form a disordered region. The span at 952–965 (KEDKEEKAEGKEGE) shows a compositional bias: basic and acidic residues. Over residues 966–975 (EATAEAEEKQ) the composition is skewed to acidic residues. 2 Gelsolin-like repeats span residues 1075–1143 (TDSS…PENF) and 1181–1254 (KCSD…QHAF).

Interacts with actin, ACTL6A, NCOA2 and CARM1. Interacts with LRRFIP1, LRRFIP2 and MYD88. Upon LPS stimulation, LRRFIP2 competes for MYD88-binding. LRRFIP1 constitutively blocks the interaction with MyD88, even in the absence of LPS. Interacts with the nuclear receptors ESR1 and THRB. Interacts with SGK3. Interacts (via the gelsolin-like region) with TMOD1. Interacts with (via the gelsolin-like region) TMOD3. Interacts with LMOD2, VCL, GSN and DES. In terms of tissue distribution, strongest expression in skeletal muscle with high expression also in the heart and lung.

The protein resides in the nucleus. It localises to the cytoplasm. Its subcellular location is the cytoskeleton. The protein localises to the microtubule organizing center. It is found in the centrosome. The protein resides in the cell projection. It localises to the podosome. Its subcellular location is the cell junction. The protein localises to the focal adhesion. Is a regulator of actin polymerization, required for proper myofibril organization and regulation of the length of sarcomeric thin filaments. It also plays a role in the assembly of cardiomyocyte cell adhesion complexes. Regulates cytoskeletal rearrangements involved in cytokinesis and cell migration, by inhibiting Rac1-dependent paxillin phosphorylation. May play a role as coactivator in transcriptional activation by hormone-activated nuclear receptors (NR) and acts in cooperation with NCOA2 and CARM1. Involved in estrogen hormone signaling. In Homo sapiens (Human), this protein is Protein flightless-1 homolog (FLII).